A 198-amino-acid chain; its full sequence is Nucleoside triphosphate pyrophosphatase (198 aa).

Asp-72 acts as the Proton acceptor in catalysis.

It belongs to the Maf family. The cofactor is a divalent metal cation.

The protein localises to the cytoplasm. The catalysed reaction is a ribonucleoside 5'-triphosphate + H2O = a ribonucleoside 5'-phosphate + diphosphate + H(+). The enzyme catalyses a 2'-deoxyribonucleoside 5'-triphosphate + H2O = a 2'-deoxyribonucleoside 5'-phosphate + diphosphate + H(+). Nucleoside triphosphate pyrophosphatase. May have a dual role in cell division arrest and in preventing the incorporation of modified nucleotides into cellular nucleic acids. The sequence is that of Nucleoside triphosphate pyrophosphatase from Corynebacterium diphtheriae (strain ATCC 700971 / NCTC 13129 / Biotype gravis).